A 1135-amino-acid polypeptide reads, in one-letter code: DNA-directed RNA polymerase I subunit RPA2 (1135 aa).

Positions 1-26 (MDVDGRWRNLPSGPSLKHLTDPSYGI) are disordered. Arginine 180 contacts RNA. The tract at residues 194-208 (VRPKWKSRGLGYTQF) is loop B. The segment at 236–247 (LNFIYRKELFFL) is loop A. Aspartate 367 provides a ligand contact to RNA. 2 fork loop regions span residues 439–453 (LRSK…DSGL) and 474–489 (RGAA…VRRL). Aspartate 755 is a binding site for Mg(2+). Position 890 (lysine 890) interacts with RNA. Residues lysine 1020 and arginine 1036 each contribute to the DNA site. At serine 1051 the chain carries Phosphoserine. Residues cysteine 1070, cysteine 1073, cysteine 1098, and cysteine 1101 each contribute to the Zn(2+) site. The C4-type zinc-finger motif lies at 1070 to 1101 (CVECGSLLSPLLEKPPPSWSAMRNRKYNCTVC).

The protein belongs to the RNA polymerase beta chain family. Component of the RNA polymerase I (Pol I) complex consisting of 13 subunits: a ten-subunit catalytic core composed of POLR1A/RPA1, POLR1B/RPA2, POLR1C/RPAC1, POLR1D/RPAC2, POLR1H/RPA12, POLR2E/RPABC1, POLR2F/RPABC2, POLR2H/RPABC3, POLR2K/RPABC4 and POLR2L/RPABC5; a mobile stalk subunit POLR1F/RPA43 protruding from the core and additional subunits homologous to general transcription factors POLR1E/RPA49 and POLR1G/RPA34. Part of Pol I pre-initiation complex (PIC), in which Pol I core assembles with RRN3 and promoter-bound UTBF and SL1/TIF-IB complex. Mg(2+) serves as cofactor.

It is found in the nucleus. Its subcellular location is the nucleolus. It localises to the chromosome. The enzyme catalyses RNA(n) + a ribonucleoside 5'-triphosphate = RNA(n+1) + diphosphate. Its function is as follows. Catalytic core component of RNA polymerase I (Pol I), a DNA-dependent RNA polymerase which synthesizes ribosomal RNA precursors using the four ribonucleoside triphosphates as substrates. Transcribes 47S pre-rRNAs from multicopy rRNA gene clusters, giving rise to 5.8S, 18S and 28S ribosomal RNAs. Pol I-mediated transcription cycle proceeds through transcription initiation, transcription elongation and transcription termination stages. During transcription initiation, Pol I pre-initiation complex (PIC) is recruited by the selectivity factor 1 (SL1/TIF-IB) complex bound to the core promoter that precedes an rDNA repeat unit. The PIC assembly bends the promoter favoring the formation of the transcription bubble and promoter escape. Once the polymerase has escaped from the promoter it enters the elongation phase during which RNA is actively polymerized, based on complementarity with the template DNA strand. Highly processive, assembles in structures referred to as 'Miller trees' where many elongating Pol I complexes queue and transcribe the same rDNA coding regions. At terminator sequences downstream of the rDNA gene, PTRF interacts with Pol I and halts Pol I transcription leading to the release of the RNA transcript and polymerase from the DNA. Forms Pol I active center together with the largest subunit POLR1A/RPA1. Appends one nucleotide at a time to the 3' end of the nascent RNA, with POLR1A/RPA1 contributing a Mg(2+)-coordinating DxDGD motif, and POLR1B/RPA2 participating in the coordination of a second Mg(2+) ion and providing lysine residues believed to facilitate Watson-Crick base pairing between the incoming nucleotide and the template base. Typically, Mg(2+) ions direct a 5' nucleoside triphosphate to form a phosphodiester bond with the 3' hydroxyl of the preceding nucleotide of the nascent RNA, with the elimination of pyrophosphate. Has proofreading activity: Pauses and backtracks to allow the cleavage of a missincorporated nucleotide via POLR1H/RPA12. High Pol I processivity is associated with decreased transcription fidelity. In Mus musculus (Mouse), this protein is DNA-directed RNA polymerase I subunit RPA2.